An 886-amino-acid polypeptide reads, in one-letter code: Cadherin-1 (886 aa).

The first 23 residues, 1 to 23 (MGARCRSFSALLLLLQVSSWLCQ), serve as a signal peptide directing secretion. The propeptide occupies 24–158 (QPESESDSCR…FHQGLRRQKR (135 aa)). The Extracellular segment spans residues 24–713 (QPESESDSCR…SLEAGLQVPA (690 aa)). 5 consecutive Cadherin domains span residues 159-266 (DWVI…RPEF), 267-379 (IQEV…APIF), 380-490 (NPST…APIF), 491-597 (VPAE…DNAP), and 598-701 (IPEP…NCMK). Asp261 provides a ligand contact to Ca(2+). O-linked (Man...) serine glycosylation is found at Ser284 and Ser289. Residue Asp292 participates in Ca(2+) binding. O-linked (Man...) threonine glycosylation is found at Thr362, Thr474, Thr476, and Thr513. N-linked (GlcNAc...) asparagine glycosylation is present at Asn562. Residues Thr580, Thr582, and Thr584 are each glycosylated (O-linked (Man...) threonine). Asn641 carries N-linked (GlcNAc...) asparagine glycosylation. Residues 714–734 (ILGILGGILALLILILLLLLF) form a helical membrane-spanning segment. The Cytoplasmic portion of the chain corresponds to 735–886 (LRRRTVVKEP…ADMYGGGEED (152 aa)). The segment at 751–771 (DTRDNVYYYDEEGGGEEDQDF) is disordered. 3 positions are modified to phosphotyrosine; by SRC: Tyr757, Tyr758, and Tyr759. Acidic residues predominate over residues 759-771 (YDEEGGGEEDQDF). The required for binding CTNND1 and PSEN1 stretch occupies residues 762–773 (EGGGEEDQDFDL). 5 positions are modified to phosphoserine: Ser774, Ser797, Ser842, Ser844, and Ser850. A required for binding alpha, beta and region spans residues 815–886 (IDENLKAADS…ADMYGGGEED (72 aa)).

Homodimer; disulfide-linked. Component of an E-cadherin/ catenin adhesion complex composed of at least E-cadherin/CDH1, beta-catenin/CTNNB1 or gamma-catenin/JUP, and potentially alpha-catenin/CTNNA1; the complex is located to adherens junctions. Found in a complex composed of CDH1, RAP1A and PKP3; PKP3 acts as a scaffold protein within the complex, the complex is required for CDH1 localization to mature desmosome cell junctions. Interacts with the TRPV4 and CTNNB1 complex. Interacts with CTNND1. The stable association of CTNNA1 is controversial as CTNNA1 was shown not to bind to F-actin when assembled in the complex. Alternatively, the CTNNA1-containing complex may be linked to F-actin by other proteins such as LIMA1. Interaction with PSEN1, cleaves CDH1 resulting in the disassociation of cadherin-based adherens junctions (CAJs). Interacts with AJAP1 and DLGAP5. Interacts with TBC1D2. Interacts with LIMA1. Interacts with CAV1. Interacts with PIP5K1C. Interacts with DDR1; this stabilizes CDH1 at the cell surface and inhibits its internalization. Interacts with RAPGEF2. Interacts with RAB8B. Interacts with KLRG1. Forms a ternary complex composed of ADAM10, CADH1 and EPHA4; within the complex, CADH1 is cleaved by ADAM10 which disrupts adherens junctions. Interacts with SPEF1. Interacts with CTNNB1 and PKP2. Interacts with AMOTL2; the interaction may facilitate binding of radial actin fibers to cell junction complexes. Interacts with DSG3; the interaction is required for CDH1 localization to developing adherens junctions. During apoptosis or with calcium influx, cleaved by a membrane-bound metalloproteinase (ADAM10), PS1/gamma-secretase and caspase-3. Processing by the metalloproteinase, induced by calcium influx, causes disruption of cell-cell adhesion and the subsequent release of beta-catenin into the cytoplasm. The residual membrane-tethered cleavage product is rapidly degraded via an intracellular proteolytic pathway. Cleavage by caspase-3 releases the cytoplasmic tail resulting in disintegration of the actin microfilament system. The gamma-secretase-mediated cleavage promotes disassembly of adherens junctions. During development of the cochlear organ of Corti, cleavage by ADAM10 at adherens junctions promotes pillar cell separation. Post-translationally, N-glycosylation at Asn-641 is essential for expression, folding and trafficking. Addition of bisecting N-acetylglucosamine by MGAT3 modulates its cell membrane location. In terms of processing, ubiquitinated by a SCF complex containing SKP2, which requires prior phosphorylation by CK1/CSNK1A1. Ubiquitinated by CBLL1/HAKAI, requires prior phosphorylation at Tyr-758. O-glycosylated. O-manosylated by TMTC1, TMTC2, TMTC3 or TMTC4. Ser-289 and Thr-513 are O-manosylated by TMTC2 or TMTC4 but not TMTC1 or TMTC3.

Its subcellular location is the cell junction. The protein resides in the adherens junction. It localises to the cell membrane. The protein localises to the endosome. It is found in the golgi apparatus. Its subcellular location is the trans-Golgi network. The protein resides in the cytoplasm. It localises to the desmosome. Its function is as follows. Cadherins are calcium-dependent cell adhesion proteins. They preferentially interact with themselves in a homophilic manner in connecting cells; cadherins may thus contribute to the sorting of heterogeneous cell types. CDH1 is involved in mechanisms regulating cell-cell adhesions, mobility and proliferation of epithelial cells. Promotes organization of radial actin fiber structure and cellular response to contractile forces, via its interaction with AMOTL2 which facilitates anchoring of radial actin fibers to CDH1 junction complexes at the cell membrane. Plays a role in the early stages of desmosome cell-cell junction formation via facilitating the recruitment of DSG2 and DSP to desmosome plaques. Has a potent invasive suppressor role. It is a ligand for integrin alpha-E/beta-7. Functionally, E-Cad/CTF2 promotes non-amyloidogenic degradation of Abeta precursors. Has a strong inhibitory effect on APP C99 and C83 production. The sequence is that of Cadherin-1 (Cdh1) from Rattus norvegicus (Rat).